Reading from the N-terminus, the 416-residue chain is Phosphatidylinositol 5-phosphate 4-kinase type-2 beta (416 aa).

N-acetylserine is present on S2. Residue T8 is modified to Phosphothreonine. Phosphoserine is present on S19. The PIPK domain maps to 38-415; it reads ASEPILSVLM…RFNEFMSNIL (378 aa). The tract at residues 64–70 is required for interaction with PIP5K1A; the sequence is VMLMPDD. An N6-acetyllysine mark is found at K94 and K150. ATP contacts are provided by residues 202–204 and K214; that span reads RNV. GTP is bound by residues 203 to 204 and K214; that span reads NV. The residue at position 322 (T322) is a Phosphothreonine. Position 326 is a phosphoserine (S326). Residue D369 coordinates GTP.

As to quaternary structure, homodimer. Binds TNFRSF1A. Interacts with PIP4K2A; the interaction suppresses ubiquitination by the SPOP/CUL3 complex. Probably interacts with PIP5K1A; the interaction inhibits PIP5K1A kinase activity. Post-translationally, ubiquitinated by the SPOP/CUL3 complex. Ubiquitination is stimulated by PtdIns5P levels. Phosphorylated on serine residues.

The protein localises to the endoplasmic reticulum membrane. The protein resides in the cell membrane. Its subcellular location is the nucleus. It is found in the cytoplasm. It carries out the reaction a 1,2-diacyl-sn-glycero-3-phospho-(1D-myo-inositol-5-phosphate) + ATP = a 1,2-diacyl-sn-glycero-3-phospho-(1D-myo-inositol-4,5-bisphosphate) + ADP + H(+). The enzyme catalyses 1,2-dihexadecanoyl-sn-glycero-3-phospho-(1D-myo-inositol-5-phosphate) + ATP = 1,2-dihexadecanoyl-sn-glycero-3-phospho-(1D-myo-inositol-4,5-bisphosphate) + ADP + H(+). The catalysed reaction is 1,2-dihexadecanoyl-sn-glycero-3-phospho-(1D-myo-inositol-5-phosphate) + GTP = 1,2-dihexadecanoyl-sn-glycero-3-phospho-(1D-myo-inositol-4,5-bisphosphate) + GDP + H(+). Functionally, participates in the biosynthesis of phosphatidylinositol 4,5-bisphosphate. Preferentially utilizes GTP, rather than ATP, for PI(5)P phosphorylation and its activity reflects changes in direct proportion to the physiological GTP concentration. Its GTP-sensing activity is critical for metabolic adaptation. PIP4Ks negatively regulate insulin signaling through a catalytic-independent mechanism. They interact with PIP5Ks and suppress PIP5K-mediated PtdIns(4,5)P2 synthesis and insulin-dependent conversion to PtdIns(3,4,5)P3. In Rattus norvegicus (Rat), this protein is Phosphatidylinositol 5-phosphate 4-kinase type-2 beta.